A 181-amino-acid polypeptide reads, in one-letter code: Large ribosomal subunit protein uL5 (181 aa).

It belongs to the universal ribosomal protein uL5 family. Part of the 50S ribosomal subunit; contacts the 5S rRNA and probably tRNA. Forms a bridge to the 30S subunit in the 70S ribosome.

Functionally, this is one of the proteins that bind and probably mediate the attachment of the 5S RNA into the large ribosomal subunit, where it forms part of the central protuberance. In the 70S ribosome it contacts protein S13 of the 30S subunit (bridge B1b), connecting the 2 subunits; this bridge is implicated in subunit movement. May contact the P site tRNA; the 5S rRNA and some of its associated proteins might help stabilize positioning of ribosome-bound tRNAs. In Methanococcus maripaludis (strain DSM 14266 / JCM 13030 / NBRC 101832 / S2 / LL), this protein is Large ribosomal subunit protein uL5.